Here is a 137-residue protein sequence, read N- to C-terminus: Nucleoside diphosphate kinase (137 aa).

6 residues coordinate ATP: lysine 9, phenylalanine 57, arginine 85, threonine 91, arginine 102, and asparagine 112. Histidine 115 serves as the catalytic Pros-phosphohistidine intermediate.

It belongs to the NDK family. In terms of assembly, homotetramer. The cofactor is Mg(2+).

It is found in the cytoplasm. The enzyme catalyses a 2'-deoxyribonucleoside 5'-diphosphate + ATP = a 2'-deoxyribonucleoside 5'-triphosphate + ADP. It carries out the reaction a ribonucleoside 5'-diphosphate + ATP = a ribonucleoside 5'-triphosphate + ADP. Its function is as follows. Major role in the synthesis of nucleoside triphosphates other than ATP. The ATP gamma phosphate is transferred to the NDP beta phosphate via a ping-pong mechanism, using a phosphorylated active-site intermediate. The chain is Nucleoside diphosphate kinase from Geotalea uraniireducens (strain Rf4) (Geobacter uraniireducens).